The primary structure comprises 313 residues: MLKMESTQQMASSIINTSFEAAVVAATSTLELMGIQYDYNEVYTRVKSKFEYVMDDSGVKNNLLGKAATIDQALNGKFGSAARNRNWMADTRTTARLDEDVNKLRMMLSSKGIDQKMRVLNACFSVKRAPGKSSSIIKCTRLMRDKIERGEVEVDDSFVEEKMEVDTIDWKSRYEQLEKRFESLKQRVNEKYTSWVQKAKKVNENMYSLQNVISQQQSQIADLQNYCNKLEVDLQNKISSLVSSVEWYLKSMELPDEIKTDIEQQLNSIDVINPINAIDDFESLIRNIILDYDRIFLMFKGLMRQCNYEYTYE.

An RNA-binding region spans residues 1–149; the sequence is MLKMESTQQM…TRLMRDKIER (149 aa). The dimerization stretch occupies residues 150 to 206; it reads GEVEVDDSFVEEKMEVDTIDWKSRYEQLEKRFESLKQRVNEKYTSWVQKAKKVNENM. Residues 166-237 are a coiled coil; the sequence is DTIDWKSRYE…NKLEVDLQNK (72 aa). An interaction with host ZC3H7B region spans residues 170 to 234; that stretch reads WKSRYEQLEK…NYCNKLEVDL (65 aa). The tract at residues 208 to 313 is interaction with host EIF4G1; that stretch reads SLQNVISQQQ…RQCNYEYTYE (106 aa).

It belongs to the rotavirus NSP3 family. In terms of assembly, homodimer. Interacts (via the coiled-coil region) with host ZC3H7B (via LD motif). Interacts with host EIF4G1.

The protein resides in the host cytoplasm. In terms of biological role, plays an important role in stimulating the translation of viral mRNAs. These mRNAs are capped but not polyadenylated, instead terminating in a conserved sequence 'GACC' at the 3' that is recognized by NSP3, which competes with host PABPC1 for EIF4G1 binding. The interaction between NSP3 and host EIF4G1 stabilizes the EIF4E-EIF4G1 interaction, thereby facilitating the initiation of capped mRNA translation. This Rotavirus A (strain RVA/Cow/United States/WC3/1981/G6P7[5]) (RV-A) protein is Non-structural protein 3.